The primary structure comprises 238 residues: MGRKWANIVAKKTAKDGANSKVYAKFGVEIYVAAKKGDPDPESNSALKFVIDRAKQAQVPKHIIDKAIDKAKGNTDETFTEGRYEGFGPNGSMLIVDTLTSNVNRTAANVRAAFGKNGGNMGASGSVSYLFDNKGVIVFGGEDADAVFEQLLEADVDVDDVEAQEGTITVYTAPTDLHKAIVALRESGIEEFQVTELEMIPQSEVELSGEALETFEKLYSVLEDDEDVQKIYTNVDGF.

The protein belongs to the TACO1 family. YeeN subfamily.

It localises to the cytoplasm. This chain is Probable transcriptional regulatory protein SPH_2064, found in Streptococcus pneumoniae (strain Hungary19A-6).